Here is a 46-residue protein sequence, read N- to C-terminus: Protein PsbN (46 aa).

Residues Val10–Phe30 traverse the membrane as a helical segment.

It belongs to the PsbN family.

Its subcellular location is the cellular thylakoid membrane. Functionally, may play a role in photosystem I and II biogenesis. The chain is Protein PsbN from Synechococcus sp. (strain CC9311).